The primary structure comprises 807 residues: Glycerol-3-phosphate acyltransferase (807 aa).

An HXXXXD motif motif is present at residues 308–313 (CHRSHM).

This sequence belongs to the GPAT/DAPAT family.

The protein resides in the cell inner membrane. The catalysed reaction is sn-glycerol 3-phosphate + an acyl-CoA = a 1-acyl-sn-glycero-3-phosphate + CoA. It functions in the pathway phospholipid metabolism; CDP-diacylglycerol biosynthesis; CDP-diacylglycerol from sn-glycerol 3-phosphate: step 1/3. The polypeptide is Glycerol-3-phosphate acyltransferase (Shewanella sp. (strain MR-4)).